The primary structure comprises 207 residues: Uracil phosphoribosyltransferase (207 aa).

Residues R77, R102, and D129–S137 contribute to the 5-phospho-alpha-D-ribose 1-diphosphate site. Uracil is bound by residues I192 and G197–A199. D198 contributes to the 5-phospho-alpha-D-ribose 1-diphosphate binding site.

It belongs to the UPRTase family. Mg(2+) serves as cofactor.

It catalyses the reaction UMP + diphosphate = 5-phospho-alpha-D-ribose 1-diphosphate + uracil. It participates in pyrimidine metabolism; UMP biosynthesis via salvage pathway; UMP from uracil: step 1/1. Allosterically activated by GTP. Catalyzes the conversion of uracil and 5-phospho-alpha-D-ribose 1-diphosphate (PRPP) to UMP and diphosphate. The protein is Uracil phosphoribosyltransferase of Dictyoglomus turgidum (strain DSM 6724 / Z-1310).